Consider the following 360-residue polypeptide: NADH-quinone oxidoreductase subunit H (360 aa).

The next 8 helical transmembrane spans lie at 20–40 (GMVWPVLWILLKIVALLIPLM), 95–115 (GLFVLGPVMAIMPALAAWVVI), 130–150 (LLLVMAITSIEVYGVIIAGWA), 176–196 (FCLLIVIMVSGSMNLTEIVLA), 206–226 (GIGFLSWNWLPLLPVFLVYLI), 261–281 (IFFLAEYASMWLVSILAALMF), 297–317 (IPGWIWLGIKTCLVVSMFIWI), and 336–356 (IFIPVTLACLLIAGGWLLSPW).

Belongs to the complex I subunit 1 family. NDH-1 is composed of 14 different subunits. Subunits NuoA, H, J, K, L, M, N constitute the membrane sector of the complex.

It is found in the cell inner membrane. It carries out the reaction a quinone + NADH + 5 H(+)(in) = a quinol + NAD(+) + 4 H(+)(out). In terms of biological role, NDH-1 shuttles electrons from NADH, via FMN and iron-sulfur (Fe-S) centers, to quinones in the respiratory chain. The immediate electron acceptor for the enzyme in this species is believed to be ubiquinone. Couples the redox reaction to proton translocation (for every two electrons transferred, four hydrogen ions are translocated across the cytoplasmic membrane), and thus conserves the redox energy in a proton gradient. This subunit may bind ubiquinone. This Verminephrobacter eiseniae (strain EF01-2) protein is NADH-quinone oxidoreductase subunit H.